Here is a 223-residue protein sequence, read N- to C-terminus: Large ribosomal subunit protein uL3 (223 aa).

The protein belongs to the universal ribosomal protein uL3 family. Part of the 50S ribosomal subunit. Forms a cluster with proteins L14 and L19.

Functionally, one of the primary rRNA binding proteins, it binds directly near the 3'-end of the 23S rRNA, where it nucleates assembly of the 50S subunit. The chain is Large ribosomal subunit protein uL3 from Nocardioides sp. (strain ATCC BAA-499 / JS614).